The following is a 534-amino-acid chain: GMP synthase [glutamine-hydrolyzing] (534 aa).

In terms of domain architecture, Glutamine amidotransferase type-1 spans 20–210 (PVLVIDFGAQ…LLVGAGCRPS (191 aa)). C97 (nucleophile) is an active-site residue. Catalysis depends on residues H184 and E186. The region spanning 211-408 (WTMINIVEEA…LGLPEDIVWR (198 aa)) is the GMPS ATP-PPase domain. 238–244 (SGGVDSA) provides a ligand contact to ATP.

In terms of assembly, homodimer.

The enzyme catalyses XMP + L-glutamine + ATP + H2O = GMP + L-glutamate + AMP + diphosphate + 2 H(+). It functions in the pathway purine metabolism; GMP biosynthesis; GMP from XMP (L-Gln route): step 1/1. Functionally, catalyzes the synthesis of GMP from XMP. This Parafrankia sp. (strain EAN1pec) protein is GMP synthase [glutamine-hydrolyzing].